Reading from the N-terminus, the 413-residue chain is Protein trichome birefringence-like 9 (413 aa).

A helical; Signal-anchor for type II membrane protein transmembrane segment spans residues 22–42 (LFVSLFLLSLLIFSTVVVDVM). The GDS motif motif lies at 141–143 (GDS). Positions 384-398 (DCSHWCLPGVPDTWN) match the DCXHWCLPGXXDXWN motif motif.

Belongs to the PC-esterase family. TBL subfamily.

It localises to the membrane. In terms of biological role, may act as a bridging protein that binds pectin and other cell wall polysaccharides. Probably involved in maintaining esterification of pectins. May be involved in the specific O-acetylation of cell wall polymers. The polypeptide is Protein trichome birefringence-like 9 (TBL9) (Arabidopsis thaliana (Mouse-ear cress)).